Consider the following 227-residue polypeptide: Isopentenyl-diphosphate Delta-isomerase 1 (227 aa).

Lys-36 is a substrate binding site. Mg(2+)-binding residues include His-40 and His-51. Positions 49–199 constitute a Nudix hydrolase domain; that stretch reads LLHRAFSVFL…EIKITPWFQI (151 aa). Residues Arg-70 and Lys-74 each coordinate substrate. Cys-86 is a catalytic residue. Residue Ser-87 participates in substrate binding. Positions 146 and 148 each coordinate Mg(2+). Residue Glu-148 is part of the active site. Lys-176 bears the N6-acetyllysine mark. Residues 225–227 carry the Microbody targeting signal motif; it reads HRM.

The protein belongs to the IPP isomerase type 1 family. As to quaternary structure, monomer. It depends on Mg(2+) as a cofactor.

Its subcellular location is the peroxisome. The enzyme catalyses isopentenyl diphosphate = dimethylallyl diphosphate. It participates in isoprenoid biosynthesis; dimethylallyl diphosphate biosynthesis; dimethylallyl diphosphate from isopentenyl diphosphate: step 1/1. In terms of biological role, catalyzes the 1,3-allylic rearrangement of the homoallylic substrate isopentenyl (IPP) to its highly electrophilic allylic isomer, dimethylallyl diphosphate (DMAPP). The protein is Isopentenyl-diphosphate Delta-isomerase 1 (IDI1) of Macaca fascicularis (Crab-eating macaque).